Reading from the N-terminus, the 127-residue chain is Transcription antitermination protein NusB (127 aa).

It belongs to the NusB family.

Functionally, involved in transcription antitermination. Required for transcription of ribosomal RNA (rRNA) genes. Binds specifically to the boxA antiterminator sequence of the ribosomal RNA (rrn) operons. This chain is Transcription antitermination protein NusB, found in Lysinibacillus sphaericus (strain C3-41).